Reading from the N-terminus, the 226-residue chain is UPF0173 metal-dependent hydrolase SRU_1937 (226 aa).

The protein belongs to the UPF0173 family.

This Salinibacter ruber (strain DSM 13855 / M31) protein is UPF0173 metal-dependent hydrolase SRU_1937.